A 357-amino-acid polypeptide reads, in one-letter code: 3-isopropylmalate dehydrogenase (357 aa).

76 to 89 (GYQWESLDISVRPE) lines the NAD(+) pocket. The substrate site is built by Arg-96, Arg-106, Arg-134, and Asp-224. Residues Asp-224, Asp-248, and Asp-252 each coordinate Mg(2+). 282-294 (GSAPDIAGQNIAN) lines the NAD(+) pocket.

The protein belongs to the isocitrate and isopropylmalate dehydrogenases family. LeuB type 1 subfamily. Homodimer. Mg(2+) serves as cofactor. Requires Mn(2+) as cofactor.

The protein resides in the cytoplasm. It catalyses the reaction (2R,3S)-3-isopropylmalate + NAD(+) = 4-methyl-2-oxopentanoate + CO2 + NADH. It functions in the pathway amino-acid biosynthesis; L-leucine biosynthesis; L-leucine from 3-methyl-2-oxobutanoate: step 3/4. Its function is as follows. Catalyzes the oxidation of 3-carboxy-2-hydroxy-4-methylpentanoate (3-isopropylmalate) to 3-carboxy-4-methyl-2-oxopentanoate. The product decarboxylates to 4-methyl-2 oxopentanoate. The protein is 3-isopropylmalate dehydrogenase of Hydrogenovibrio crunogenus (strain DSM 25203 / XCL-2) (Thiomicrospira crunogena).